A 220-amino-acid chain; its full sequence is Peritrophin-55 (220 aa).

The signal sequence occupies residues 1–19 (MKSVFVCTLVLALAHHAFA). N-linked (GlcNAc...) asparagine glycosylation occurs at Asn-29. One can recognise a Chitin-binding type-2 domain in the interval 33 to 95 (ITPCLGNDII…NFIPAPTCEY (63 aa)). A disulfide bridge links Cys-68 with Cys-84. The span at 116–165 (TTLKTTPSKTTPIVTTAPPSTPVPSTIVTNKPDPTTPKTTKPPKVTTTVN) shows a compositional bias: low complexity. The disordered stretch occupies residues 116-220 (TTLKTTPSKT…TPPSIVQLQN (105 aa)). The span at 197-210 (PTPPGMPPTPPSFG) shows a compositional bias: pro residues.

Post-translationally, glycosylated. Larval peritrophic membrane.

Its function is as follows. May bind oligosaccharide structures. This Lucilia cuprina (Green bottle fly) protein is Peritrophin-55.